The primary structure comprises 99 residues: uncharacterized protein (99 aa).

This is an uncharacterized protein from Thermoproteus tenax virus 1 (strain KRA1) (TTV1).